The following is a 216-amino-acid chain: Elongation factor Ts (216 aa).

Positions 81-84 (TDFV) are involved in Mg(2+) ion dislocation from EF-Tu.

This sequence belongs to the EF-Ts family.

It is found in the cytoplasm. In terms of biological role, associates with the EF-Tu.GDP complex and induces the exchange of GDP to GTP. It remains bound to the aminoacyl-tRNA.EF-Tu.GTP complex up to the GTP hydrolysis stage on the ribosome. The chain is Elongation factor Ts from Geotalea daltonii (strain DSM 22248 / JCM 15807 / FRC-32) (Geobacter daltonii).